Consider the following 86-residue polypeptide: Conotoxin Lt15a (86 aa).

The N-terminal stretch at 1 to 23 (MEKLTILILVATVLLAIQVLVQS) is a signal peptide. Positions 24 to 49 (DGENPVKGRVKHYAAKRFSALFRGPR) are excised as a propeptide.

Belongs to the conotoxin O2 superfamily. Contains 4 disulfide bonds. As to expression, expressed by the venom duct.

Its subcellular location is the secreted. In Conus litteratus (Lettered cone), this protein is Conotoxin Lt15a.